Consider the following 72-residue polypeptide: Sec-independent protein translocase protein TatA (72 aa).

The helical transmembrane segment at 1–21 (MAGLSIWHVVIFAIVVILLFG) threads the bilayer. The tract at residues 47–72 (DEAASLNSPRTIDAQVKTSESTSVKS) is disordered. Residues 51-72 (SLNSPRTIDAQVKTSESTSVKS) are compositionally biased toward polar residues.

The protein belongs to the TatA/E family. The Tat system comprises two distinct complexes: a TatABC complex, containing multiple copies of TatA, TatB and TatC subunits, and a separate TatA complex, containing only TatA subunits. Substrates initially bind to the TatABC complex, which probably triggers association of the separate TatA complex to form the active translocon.

Its subcellular location is the cell inner membrane. Part of the twin-arginine translocation (Tat) system that transports large folded proteins containing a characteristic twin-arginine motif in their signal peptide across membranes. TatA could form the protein-conducting channel of the Tat system. This chain is Sec-independent protein translocase protein TatA, found in Acinetobacter baumannii (strain AB307-0294).